A 361-amino-acid chain; its full sequence is Beta-hexosaminidase (361 aa).

Substrate contacts are provided by residues Asp69, Arg77, Arg144, and 174–175 (KH). Residue His187 is the Proton donor/acceptor of the active site. The active-site Nucleophile is the Asp258.

The protein belongs to the glycosyl hydrolase 3 family. NagZ subfamily.

It localises to the cytoplasm. The enzyme catalyses Hydrolysis of terminal non-reducing N-acetyl-D-hexosamine residues in N-acetyl-beta-D-hexosaminides.. It functions in the pathway cell wall biogenesis; peptidoglycan recycling. Plays a role in peptidoglycan recycling by cleaving the terminal beta-1,4-linked N-acetylglucosamine (GlcNAc) from peptide-linked peptidoglycan fragments, giving rise to free GlcNAc, anhydro-N-acetylmuramic acid and anhydro-N-acetylmuramic acid-linked peptides. The protein is Beta-hexosaminidase of Neisseria gonorrhoeae (strain ATCC 700825 / FA 1090).